Here is a 465-residue protein sequence, read N- to C-terminus: Interferon-inducible GTPase 5 (465 aa).

One can recognise an IRG-type G domain in the interval 53–235 (TRLEVGVTGE…PLLMSTWERD (183 aa)). GTP is bound by residues 62–69 (ESGAGKSS), 87–91 (TGVVE), 169–171 (KVD), and 216–218 (SNL). A phosphoserine mark is found at Ser-247 and Ser-304. The disordered stretch occupies residues 405-438 (EEEEDTQPDVSLEAAGDNGVEKRGSGEGSMEEAP).

The protein belongs to the TRAFAC class dynamin-like GTPase superfamily. IRG family.

Its subcellular location is the cell projection. It localises to the cilium. The protein resides in the flagellum. The protein localises to the lipid droplet. The catalysed reaction is GTP + H2O = GDP + phosphate + H(+). Functionally, required for sperm motility and therefore male fertility, via positive regulation of spermatozoa fibrous sheath formation. The protein is Interferon-inducible GTPase 5 (IRGC) of Bos taurus (Bovine).